The primary structure comprises 268 residues: Glucosamine-6-phosphate deaminase (268 aa).

Aspartate 72 serves as the catalytic Proton acceptor; for enolization step. Aspartate 141 (for ring-opening step) is an active-site residue. Histidine 143 serves as the catalytic Proton acceptor; for ring-opening step. Glutamate 148 serves as the catalytic For ring-opening step.

This sequence belongs to the glucosamine/galactosamine-6-phosphate isomerase family. NagB subfamily.

It carries out the reaction alpha-D-glucosamine 6-phosphate + H2O = beta-D-fructose 6-phosphate + NH4(+). It functions in the pathway amino-sugar metabolism; N-acetylneuraminate degradation; D-fructose 6-phosphate from N-acetylneuraminate: step 5/5. With respect to regulation, allosterically activated by N-acetylglucosamine 6-phosphate (GlcNAc6P). Functionally, catalyzes the reversible isomerization-deamination of glucosamine 6-phosphate (GlcN6P) to form fructose 6-phosphate (Fru6P) and ammonium ion. This chain is Glucosamine-6-phosphate deaminase, found in Borrelia garinii subsp. bavariensis (strain ATCC BAA-2496 / DSM 23469 / PBi) (Borreliella bavariensis).